A 161-amino-acid chain; its full sequence is Nucleotide-binding protein Bcep18194_A5887 (161 aa).

This sequence belongs to the YajQ family.

Nucleotide-binding protein. The polypeptide is Nucleotide-binding protein Bcep18194_A5887 (Burkholderia lata (strain ATCC 17760 / DSM 23089 / LMG 22485 / NCIMB 9086 / R18194 / 383)).